An 81-amino-acid polypeptide reads, in one-letter code: Sec-independent protein translocase protein TatA (81 aa).

A helical membrane pass occupies residues 1-21 (MGGISVWQLLIIAVIVVLLFG). The disordered stretch occupies residues 42–81 (AMSDEDSAKNEKDADFEPKSLEKQQQKEAAPETKKDKEQA).

The protein belongs to the TatA/E family. In terms of assembly, the Tat system comprises two distinct complexes: a TatABC complex, containing multiple copies of TatA, TatB and TatC subunits, and a separate TatA complex, containing only TatA subunits. Substrates initially bind to the TatABC complex, which probably triggers association of the separate TatA complex to form the active translocon.

It is found in the cell inner membrane. Part of the twin-arginine translocation (Tat) system that transports large folded proteins containing a characteristic twin-arginine motif in their signal peptide across membranes. TatA could form the protein-conducting channel of the Tat system. The protein is Sec-independent protein translocase protein TatA of Vibrio parahaemolyticus serotype O3:K6 (strain RIMD 2210633).